The following is a 303-amino-acid chain: Sulfate adenylyltransferase subunit 2 (303 aa).

Belongs to the PAPS reductase family. CysD subfamily. In terms of assembly, heterodimer composed of CysD, the smaller subunit, and CysN.

The enzyme catalyses sulfate + ATP + H(+) = adenosine 5'-phosphosulfate + diphosphate. It functions in the pathway sulfur metabolism; hydrogen sulfide biosynthesis; sulfite from sulfate: step 1/3. Functionally, with CysN forms the ATP sulfurylase (ATPS) that catalyzes the adenylation of sulfate producing adenosine 5'-phosphosulfate (APS) and diphosphate, the first enzymatic step in sulfur assimilation pathway. APS synthesis involves the formation of a high-energy phosphoric-sulfuric acid anhydride bond driven by GTP hydrolysis by CysN coupled to ATP hydrolysis by CysD. The protein is Sulfate adenylyltransferase subunit 2 of Aliarcobacter butzleri (strain RM4018) (Arcobacter butzleri).